Reading from the N-terminus, the 487-residue chain is b(0,+)-type amino acid transporter 1 (487 aa).

The span at 1-20 (MEETSPRRRREDEKSVHSTE) shows a compositional bias: basic and acidic residues. Residues 1 to 23 (MEETSPRRRREDEKSVHSTEPKT) form a disordered region. The Cytoplasmic portion of the chain corresponds to 1–31 (MEETSPRRRREDEKSVHSTEPKTTSLQKEVG). The residue at position 18 (Ser-18) is a Phosphoserine. Residues 32–55 (LLSGICIIVGTIIGSGIFISPKSV) form a helical membrane-spanning segment. 43 to 47 (IIGSG) contacts L-arginine. The Extracellular portion of the chain corresponds to 56–62 (LANTESV). Residues 63 to 84 (GPCLIIWAACGVLATLGALCFA) form a helical membrane-spanning segment. The Cytoplasmic portion of the chain corresponds to 85 to 110 (ELGTMITKSGGEYPYLMEAFGPIPAY). A helical membrane pass occupies residues 111-137 (LFSWTSLIVMKPSSFAIICLSFSEYVC). The Extracellular portion of the chain corresponds to 138-147 (AAFYLGCRPP). 2 helical membrane-spanning segments follow: residues 148–169 (AVVV…NALS) and 170–193 (VRLG…IIII). At 194-217 (SGLVLLAQGNVKNFQNSFEGSQTS) the chain is on the extracellular side. The helical transmembrane segment at 218 to 238 (VGSISLAFYNGLWAYDGWNQL) threads the bilayer. An L-arginine-binding site is contributed by Asp-233. At 239 to 251 (NYITEELRNPYRN) the chain is on the cytoplasmic side. A helical membrane pass occupies residues 252-274 (LPMAIVIGIPLVTVCYILMNIAY). Residues 275 to 302 (FTVMTPTELLQSQAVAVTFGDRVLYPAS) are Extracellular-facing. A helical membrane pass occupies residues 303 to 325 (WVVPLFVAFSTIGAANGTCFTAG). Residues 326–351 (RLIYVAGREGHMLKVLSYISVKRLTP) lie on the Cytoplasmic side of the membrane. The next 2 helical transmembrane spans lie at 352 to 370 (APAL…IPGD) and 371 to 391 (INSL…MTIL). The Cytoplasmic portion of the chain corresponds to 392–410 (GLVVMRFTRKDLERPIKVP). A helical membrane pass occupies residues 411–431 (IFIPIIVILVSVFLILAPIIS). The Extracellular segment spans residues 432–434 (SPA). The helical transmembrane segment at 435-450 (WEYLYCVLFILSGLIF) threads the bilayer. The Cytoplasmic portion of the chain corresponds to 451–487 (YFLFVHYKFRWAQKISRPITKHLQMLMEVVPPEKDPE).

It belongs to the amino acid-polyamine-organocation (APC) superfamily. As to quaternary structure, disulfide-linked heterodimer composed of the catalytic light chain subunit SLC7A9 and the heavy chain subunit SLC3A1. The heterodimer is the minimal functional unit. Assembles in heterotetramers (dimers of heterodimers) and higher order oligomers; the oligomerization is mediated by SLC3A1 likely to prevent degradation and facilitate heteromer trafficking to the plasma membrane. Interacts with CAV1. Outer medulla of kidney (at protein level). Kidney and small intestine. In the kidney localized to the apical membrane of the proximal tubules.

It localises to the apical cell membrane. The enzyme catalyses L-leucine(out) + L-arginine(in) = L-leucine(in) + L-arginine(out). It catalyses the reaction L-histidine(out) + L-arginine(in) = L-histidine(in) + L-arginine(out). It carries out the reaction L-arginine(in) + L-phenylalanine(out) = L-arginine(out) + L-phenylalanine(in). The catalysed reaction is L-cysteine(out) + L-arginine(in) = L-cysteine(in) + L-arginine(out). The enzyme catalyses L-cystine(out) + L-arginine(in) = L-cystine(in) + L-arginine(out). It catalyses the reaction L-lysine(out) + L-arginine(in) = L-lysine(in) + L-arginine(out). Functionally, associates with SLC3A1 to form a functional transporter complex that mediates the electrogenic exchange between cationic amino acids and neutral amino acids, with a stoichiometry of 1:1. Has system b(0,+)-like activity with high affinity for extracellular cationic amino acids and L-cystine and lower affinity for intracellular neutral amino acids. Substrate exchange is driven by high concentration of intracellular neutral amino acids and the intracellular reduction of L-cystine to L-cysteine. Required for reabsorption of L-cystine and dibasic amino acids across the brush border membrane in renal proximal tubules. This Rattus norvegicus (Rat) protein is b(0,+)-type amino acid transporter 1 (Slc7a9).